A 216-amino-acid chain; its full sequence is Leucyl/phenylalanyl-tRNA--protein transferase (216 aa).

This sequence belongs to the L/F-transferase family.

The protein resides in the cytoplasm. The enzyme catalyses N-terminal L-lysyl-[protein] + L-leucyl-tRNA(Leu) = N-terminal L-leucyl-L-lysyl-[protein] + tRNA(Leu) + H(+). It carries out the reaction N-terminal L-arginyl-[protein] + L-leucyl-tRNA(Leu) = N-terminal L-leucyl-L-arginyl-[protein] + tRNA(Leu) + H(+). It catalyses the reaction L-phenylalanyl-tRNA(Phe) + an N-terminal L-alpha-aminoacyl-[protein] = an N-terminal L-phenylalanyl-L-alpha-aminoacyl-[protein] + tRNA(Phe). Functionally, functions in the N-end rule pathway of protein degradation where it conjugates Leu, Phe and, less efficiently, Met from aminoacyl-tRNAs to the N-termini of proteins containing an N-terminal arginine or lysine. The polypeptide is Leucyl/phenylalanyl-tRNA--protein transferase (Maricaulis maris (strain MCS10) (Caulobacter maris)).